We begin with the raw amino-acid sequence, 589 residues long: Protein kinase G11A (589 aa).

Positions 1 to 167 are disordered; the sequence is MASKAMPRAP…SACSSISSVT (167 aa). 3 stretches are compositionally biased toward polar residues: residues 15-36, 46-55, and 63-76; these read NLQSLKLCSQNDSSLETTSPSK, AESSKPNSEV, and TQHQNESIDLTGSN. Over residues 91 to 100 the composition is skewed to basic and acidic residues; it reads RLADEEKGVV. A compositionally biased stretch (low complexity) spans 142-165; it reads SSSRCRPSTSSDVSDESACSSISS. Positions 195–533 constitute a Protein kinase domain; sequence FKLLKKLGCG…ATEIKQHPFF (339 aa). Residues 201–209 and K224 contribute to the ATP site; that span reads LGCGDIGSV. D320 serves as the catalytic Proton acceptor. Residues 551–589 are disordered; sequence RPVEIERPPKQPVSTSEPAAAPSDAAQKSSDSYLEFDFF.

The protein belongs to the protein kinase superfamily. Ser/Thr protein kinase family.

It catalyses the reaction L-seryl-[protein] + ATP = O-phospho-L-seryl-[protein] + ADP + H(+). It carries out the reaction L-threonyl-[protein] + ATP = O-phospho-L-threonyl-[protein] + ADP + H(+). In terms of biological role, may play a role in the regulation of metabolism and signal transduction processes. In Oryza sativa subsp. indica (Rice), this protein is Protein kinase G11A.